We begin with the raw amino-acid sequence, 125 residues long: UPF0102 protein PA4424 (125 aa).

Belongs to the UPF0102 family.

The polypeptide is UPF0102 protein PA4424 (Pseudomonas aeruginosa (strain ATCC 15692 / DSM 22644 / CIP 104116 / JCM 14847 / LMG 12228 / 1C / PRS 101 / PAO1)).